A 93-amino-acid polypeptide reads, in one-letter code: MSKVCIIAWVHGRVQGVGFRYTTQHEAQRLGLTGYARNLDDGSVEVVACGESEQVDKLMKWLKDGGPRSARVDRVLSEPHRPGEELTGFRIRY.

Positions 5–93 (CIIAWVHGRV…EELTGFRIRY (89 aa)) constitute an Acylphosphatase-like domain. Residues arginine 20 and asparagine 38 contribute to the active site.

This sequence belongs to the acylphosphatase family.

It catalyses the reaction an acyl phosphate + H2O = a carboxylate + phosphate + H(+). The chain is Acylphosphatase (acyP) from Citrobacter koseri (strain ATCC BAA-895 / CDC 4225-83 / SGSC4696).